A 367-amino-acid polypeptide reads, in one-letter code: Glycerol dehydrogenase (367 aa).

NAD(+) is bound by residues D37, G94, K95, T116, and S119. D121 is a glycerol binding site. NAD(+) is bound by residues S125, L127, and Y131. Zn(2+) contacts are provided by D171, H254, and H271. Residue H254 coordinates glycerol.

This sequence belongs to the iron-containing alcohol dehydrogenase family. Requires Zn(2+) as cofactor.

It carries out the reaction glycerol + NAD(+) = dihydroxyacetone + NADH + H(+). It functions in the pathway polyol metabolism; glycerol fermentation; glycerone phosphate from glycerol (oxidative route): step 1/2. Catalyzes the NAD-dependent oxidation of glycerol to dihydroxyacetone (glycerone). Allows microorganisms to utilize glycerol as a source of carbon under anaerobic conditions. The protein is Glycerol dehydrogenase (gldA) of Escherichia coli O6:H1 (strain CFT073 / ATCC 700928 / UPEC).